The primary structure comprises 705 residues: Polyribonucleotide nucleotidyltransferase (705 aa).

Asp486 and Asp492 together coordinate Mg(2+). The KH domain maps to 553–612; the sequence is PRIYKIKINPEKIKDVIGKGGSVIRMLTEKTKSSIEIEDDGTVKVISTDIKNAQCALKKI. The region spanning 622–690 is the S1 motif domain; the sequence is NKIYVAKITR…RYGRIRLSFT (69 aa).

Belongs to the polyribonucleotide nucleotidyltransferase family. As to quaternary structure, component of the RNA degradosome, which is a multiprotein complex involved in RNA processing and mRNA degradation. It depends on Mg(2+) as a cofactor.

It is found in the cytoplasm. The catalysed reaction is RNA(n+1) + phosphate = RNA(n) + a ribonucleoside 5'-diphosphate. In terms of biological role, involved in mRNA degradation. Catalyzes the phosphorolysis of single-stranded polyribonucleotides processively in the 3'- to 5'-direction. The protein is Polyribonucleotide nucleotidyltransferase of Wigglesworthia glossinidia brevipalpis.